A 469-amino-acid chain; its full sequence is Lipase A (469 aa).

The signal sequence occupies residues 1-22; that stretch reads MMFLTQLVSALFLFFLGPISYG. Residues 40-51 are compositionally biased toward pro residues; it reads PSEDPFYQPPPG. The disordered stretch occupies residues 40-59; it reads PSEDPFYQPPPGYEETEPGT. A glycan (N-linked (GlcNAc...) asparagine) is linked at Asn-111. The cysteines at positions 129 and 304 are disulfide-linked. Residues Ser-217, Asp-361, and His-393 each act as charge relay system in the active site. An intrachain disulfide couples Cys-377 to Cys-421.

The protein belongs to the AB hydrolase superfamily. Lipase family. Class Lip subfamily. Monomer.

It is found in the secreted. It catalyses the reaction a triacylglycerol + H2O = a diacylglycerol + a fatty acid + H(+). In terms of biological role, hydrolyzes triglycerides, with a preference for substrates with short-chain lengths (C4 to C8). The chain is Lipase A from Arthroderma benhamiae (strain ATCC MYA-4681 / CBS 112371) (Trichophyton mentagrophytes).